A 41-amino-acid polypeptide reads, in one-letter code: MARTKQTARKSTGAKAPRKQLASKAARKSAPATGGIKKPHR.

A disordered region spans residues 1–41; it reads MARTKQTARKSTGAKAPRKQLASKAARKSAPATGGIKKPHR.

This sequence belongs to the histone H3 family. As to quaternary structure, the nucleosome is a histone octamer containing two molecules each of H2A, H2B, H3 and H4 assembled in one H3-H4 heterotetramer and two H2A-H2B heterodimers. The octamer wraps approximately 147 bp of DNA.

It is found in the nucleus. The protein localises to the chromosome. In terms of biological role, core component of nucleosome. Nucleosomes wrap and compact DNA into chromatin, limiting DNA accessibility to the cellular machineries which require DNA as a template. Histones thereby play a central role in transcription regulation, DNA repair, DNA replication and chromosomal stability. DNA accessibility is regulated via a complex set of post-translational modifications of histones, also called histone code, and nucleosome remodeling. The protein is Histone H3.2 of Tetrahymena australis.